Reading from the N-terminus, the 376-residue chain is D-alanine--D-alanine ligase (376 aa).

The 209-residue stretch at 150–358 (KIIFEKEGLP…YSELINKLIE (209 aa)) folds into the ATP-grasp domain. 183 to 238 (EGRLTYPCFVKPSNAGSSVGVNKASDRESLVKALNIAAKNDRRILVEEFINGREIE) is an ATP binding site. Mg(2+) is bound by residues D311, E325, and N327.

The protein belongs to the D-alanine--D-alanine ligase family. It depends on Mg(2+) as a cofactor. Mn(2+) is required as a cofactor.

The protein resides in the cytoplasm. It catalyses the reaction 2 D-alanine + ATP = D-alanyl-D-alanine + ADP + phosphate + H(+). Its pathway is cell wall biogenesis; peptidoglycan biosynthesis. In terms of biological role, cell wall formation. The sequence is that of D-alanine--D-alanine ligase from Ruminiclostridium cellulolyticum (strain ATCC 35319 / DSM 5812 / JCM 6584 / H10) (Clostridium cellulolyticum).